A 290-amino-acid chain; its full sequence is Sodium/potassium-transporting ATPase subunit beta-2 (290 aa).

The Cytoplasmic portion of the chain corresponds to 1–39; the sequence is MVIQKEKKSCGQVVEEWKEFVWNPRTHQFMGRTGTSWAF. The chain crosses the membrane as a helical; Signal-anchor for type II membrane protein span at residues 40–67; that stretch reads ILLFYLVFYGFLTAMFTLTMWVMLQTVS. Residues 68-290 are Extracellular-facing; the sequence is DHTPKYQDRL…VAFKLRINKT (223 aa). 2 N-linked (GlcNAc...) asparagine glycosylation sites follow: Asn96 and Asn118. Cys129 and Cys150 are joined by a disulfide. N-linked (GlcNAc...) asparagine glycosylation is found at Asn153 and Asn159. Cys160 and Cys177 are joined by a disulfide. Asn193, Asn197, and Asn238 each carry an N-linked (GlcNAc...) asparagine glycan. An immunoglobulin-like region spans residues 193 to 290; the sequence is NQSMNVTCAG…VAFKLRINKT (98 aa). A disulfide bond links Cys200 and Cys261.

The protein belongs to the X(+)/potassium ATPases subunit beta family. The sodium/potassium-transporting ATPase is composed of a catalytic alpha subunit, an auxiliary non-catalytic beta subunit and an additional regulatory subunit. Interacts with BSG.

It localises to the cell membrane. Its function is as follows. This is the non-catalytic component of the active enzyme, which catalyzes the hydrolysis of ATP coupled with the exchange of Na(+) and K(+) ions across the plasma membrane. The exact function of the beta-2 subunit is not known. Functionally, mediates cell adhesion of neurons and astrocytes, and promotes neurite outgrowth. This chain is Sodium/potassium-transporting ATPase subunit beta-2 (ATP1B2), found in Ochotona curzoniae (Black-lipped pika).